The following is a 99-amino-acid chain: DNA-directed RNA polymerase subunit omega (99 aa).

Belongs to the RNA polymerase subunit omega family. In terms of assembly, the RNAP catalytic core consists of 2 alpha, 1 beta, 1 beta' and 1 omega subunit. When a sigma factor is associated with the core the holoenzyme is formed, which can initiate transcription.

It catalyses the reaction RNA(n) + a ribonucleoside 5'-triphosphate = RNA(n+1) + diphosphate. Functionally, promotes RNA polymerase assembly. Latches the N- and C-terminal regions of the beta' subunit thereby facilitating its interaction with the beta and alpha subunits. This Xylella fastidiosa (strain 9a5c) protein is DNA-directed RNA polymerase subunit omega (rpoZ).